Consider the following 96-residue polypeptide: Protein Vpr (96 aa).

The homooligomerization stretch occupies residues 1-42; the sequence is MEQAPEDQGPQREPYNEWTLELLEELKSEAVRHFPRIWLHSL. Phosphoserine; by host is present on residues serine 79, serine 94, and serine 96.

It belongs to the HIV-1 VPR protein family. As to quaternary structure, homooligomer, may form homodimer. Interacts with p6-gag region of the Pr55 Gag precursor protein through a (Leu-X-X)4 motif near the C-terminus of the P6gag protein. Interacts with host UNG. May interact with host RAD23A/HHR23A. Interacts with host VPRBP/DCAF1, leading to hijack the CUL4A-RBX1-DDB1-DCAF1/VPRBP complex, mediating ubiquitination of host proteins such as TERT and ZGPAT and arrest of the cell cycle in G2 phase. In terms of processing, phosphorylated on several residues by host. These phosphorylations regulate VPR activity for the nuclear import of the HIV-1 pre-integration complex.

The protein resides in the virion. It is found in the host nucleus. It localises to the host extracellular space. Functionally, during virus replication, may deplete host UNG protein, and incude G2-M cell cycle arrest. Acts by targeting specific host proteins for degradation by the 26S proteasome, through association with the cellular CUL4A-DDB1 E3 ligase complex by direct interaction with host VPRPB/DCAF-1. Cell cycle arrest reportedly occurs within hours of infection and is not blocked by antiviral agents, suggesting that it is initiated by the VPR carried into the virion. Additionally, VPR induces apoptosis in a cell cycle dependent manner suggesting that these two effects are mechanistically linked. Detected in the serum and cerebrospinal fluid of AIDS patient, VPR may also induce cell death to bystander cells. During virus entry, plays a role in the transport of the viral pre-integration (PIC) complex to the host nucleus. This function is crucial for viral infection of non-dividing macrophages. May act directly at the nuclear pore complex, by binding nucleoporins phenylalanine-glycine (FG)-repeat regions. This Homo sapiens (Human) protein is Protein Vpr.